The chain runs to 199 residues: Small ribosomal subunit protein uS2 (199 aa).

This sequence belongs to the universal ribosomal protein uS2 family.

The polypeptide is Small ribosomal subunit protein uS2 (rps2) (Thermoplasma acidophilum (strain ATCC 25905 / DSM 1728 / JCM 9062 / NBRC 15155 / AMRC-C165)).